The sequence spans 354 residues: Homer protein homolog 2 (354 aa).

The WH1 domain occupies 1 to 110 (MGEQPIFTTR…EKFQEVREAA (110 aa)). Residues 92-120 (SEQQLTKFAEKFQEVREAARLARDKSQEK) adopt a coiled-coil conformation. A disordered region spans residues 114–163 (RDKSQEKIETSSNHSQESGCETPSSTQASSVNGTDDEKASHASPADTHLK). A compositionally biased stretch (polar residues) spans 123-146 (TSSNHSQESGCETPSSTQASSVNG). Positions 160-329 (THLKSENDKL…RHLKGELKSF (170 aa)) form a coiled coil.

This sequence belongs to the Homer family. Isoform 1 and isoform 2 encode coiled-coil structures that mediate homo- and heteromultimerization. Interacts with NFATC2; interaction is reduced by AKT activation. Interacts with NFATC1 and NFATC4. Interacts with DAGLA (via PPXXF motif); this interaction is required for the cell membrane localization of DAGLA. Constitutively expressed in the adult hippocampus.

It localises to the cytoplasm. It is found in the cell membrane. Its subcellular location is the postsynaptic density. The protein localises to the synapse. The protein resides in the cell projection. It localises to the stereocilium. Its function is as follows. Postsynaptic density scaffolding protein. Binds and cross-links cytoplasmic regions of GRM1, GRM5, ITPR1, DNM3, RYR1, RYR2, SHANK1 and SHANK3. By physically linking GRM1 and GRM5 with ER-associated ITPR1 receptors, it aids the coupling of surface receptors to intracellular calcium release. May also couple GRM1 to PI3 kinase through its interaction with AGAP2. Isoforms can be differently regulated and may play an important role in maintaining the plasticity at glutamatergic synapses. Required for normal hearing. Negatively regulates T cell activation by inhibiting the calcineurin-NFAT pathway. Acts by competing with calcineurin/PPP3CA for NFAT protein binding, hence preventing NFAT activation by PPP3CA. The protein is Homer protein homolog 2 of Rattus norvegicus (Rat).